We begin with the raw amino-acid sequence, 256 residues long: Acetyl-coenzyme A carboxylase carboxyl transferase subunit alpha (256 aa).

In terms of domain architecture, CoA carboxyltransferase C-terminal spans Met1–Glu236.

It belongs to the AccA family. In terms of assembly, acetyl-CoA carboxylase is a heterohexamer composed of biotin carboxyl carrier protein (AccB), biotin carboxylase (AccC) and two subunits each of ACCase subunit alpha (AccA) and ACCase subunit beta (AccD).

It is found in the cytoplasm. It carries out the reaction N(6)-carboxybiotinyl-L-lysyl-[protein] + acetyl-CoA = N(6)-biotinyl-L-lysyl-[protein] + malonyl-CoA. It participates in lipid metabolism; malonyl-CoA biosynthesis; malonyl-CoA from acetyl-CoA: step 1/1. Component of the acetyl coenzyme A carboxylase (ACC) complex. First, biotin carboxylase catalyzes the carboxylation of biotin on its carrier protein (BCCP) and then the CO(2) group is transferred by the carboxyltransferase to acetyl-CoA to form malonyl-CoA. The chain is Acetyl-coenzyme A carboxylase carboxyl transferase subunit alpha from Streptococcus thermophilus (strain ATCC BAA-491 / LMD-9).